Consider the following 320-residue polypeptide: Phosphate acyltransferase (320 aa).

The protein belongs to the PlsX family. Homodimer. Probably interacts with PlsY.

Its subcellular location is the cytoplasm. It carries out the reaction a fatty acyl-[ACP] + phosphate = an acyl phosphate + holo-[ACP]. The protein operates within lipid metabolism; phospholipid metabolism. Its function is as follows. Catalyzes the reversible formation of acyl-phosphate (acyl-PO(4)) from acyl-[acyl-carrier-protein] (acyl-ACP). This enzyme utilizes acyl-ACP as fatty acyl donor, but not acyl-CoA. In Chlamydia pneumoniae (Chlamydophila pneumoniae), this protein is Phosphate acyltransferase.